The following is a 387-amino-acid chain: Succinate--CoA ligase [ADP-forming] subunit beta (387 aa).

The 236-residue stretch at 9-244 (KQLFASYGLP…VSQEDDRENR (236 aa)) folds into the ATP-grasp domain. Residues Lys46, 53–55 (GRG), Glu99, Cys102, and Glu107 each bind ATP. Mg(2+) is bound by residues Asn199 and Asp213. Residues Asn264 and 321–323 (GIV) contribute to the substrate site.

Belongs to the succinate/malate CoA ligase beta subunit family. Heterotetramer of two alpha and two beta subunits. Mg(2+) is required as a cofactor.

The enzyme catalyses succinate + ATP + CoA = succinyl-CoA + ADP + phosphate. The catalysed reaction is GTP + succinate + CoA = succinyl-CoA + GDP + phosphate. Its pathway is carbohydrate metabolism; tricarboxylic acid cycle; succinate from succinyl-CoA (ligase route): step 1/1. Succinyl-CoA synthetase functions in the citric acid cycle (TCA), coupling the hydrolysis of succinyl-CoA to the synthesis of either ATP or GTP and thus represents the only step of substrate-level phosphorylation in the TCA. The beta subunit provides nucleotide specificity of the enzyme and binds the substrate succinate, while the binding sites for coenzyme A and phosphate are found in the alpha subunit. This chain is Succinate--CoA ligase [ADP-forming] subunit beta, found in Legionella pneumophila (strain Corby).